Here is a 799-residue protein sequence, read N- to C-terminus: DISARM protein DrmE (799 aa).

The protein localises to the cytoplasm. Component of antiviral defense system DISARM (defense island system associated with restriction-modification), composed of DrmE, DrmA, DrmB, DrmC and DrmMII. DISARM is probably a multi-gene restriction module, this subunit has an unknown function. Expression of DISARM in B.subtilis (strain BEST7003) confers resistance to phages Nf, phi29, phi105, phi3T, SPO1, SPR and SPP1. Protection is over 10(7)-fold against phi3T, 10(4)-10(5)-fold against Nf, phi29, phi105 and SPR, 100-fold against SPO1 and 10-fold against SPP1. DISARM does not interfere with phage adsorption, but instead interferes with (phi3T) DNA replication early in its cycle, preventing replication, circularization and lysogeny and probably causes phage DNA degradation (DNA is degraded in SPP1-infected cells). The chain is DISARM protein DrmE from Bacillus paralicheniformis (strain ATCC 9945a / NCIMB 11709 / CD-2).